A 425-amino-acid chain; its full sequence is Enolase (425 aa).

Gln-163 provides a ligand contact to (2R)-2-phosphoglycerate. Glu-205 acts as the Proton donor in catalysis. Mg(2+) is bound by residues Asp-242, Glu-285, and Asp-312. (2R)-2-phosphoglycerate-binding residues include Lys-337, Arg-366, Ser-367, and Lys-388. Lys-337 serves as the catalytic Proton acceptor.

Belongs to the enolase family. It depends on Mg(2+) as a cofactor.

The protein resides in the cytoplasm. The protein localises to the secreted. It localises to the cell surface. It carries out the reaction (2R)-2-phosphoglycerate = phosphoenolpyruvate + H2O. The protein operates within carbohydrate degradation; glycolysis; pyruvate from D-glyceraldehyde 3-phosphate: step 4/5. Its function is as follows. Catalyzes the reversible conversion of 2-phosphoglycerate (2-PG) into phosphoenolpyruvate (PEP). It is essential for the degradation of carbohydrates via glycolysis. The sequence is that of Enolase from Syntrophomonas wolfei subsp. wolfei (strain DSM 2245B / Goettingen).